The following is an 883-amino-acid chain: Valine--tRNA ligase (883 aa).

The short motif at P46–H56 is the 'HIGH' region element. Positions K520 to S524 match the 'KMSKS' region motif. K523 contributes to the ATP binding site. A coiled-coil region spans residues L809–K883.

Belongs to the class-I aminoacyl-tRNA synthetase family. ValS type 1 subfamily. As to quaternary structure, monomer.

Its subcellular location is the cytoplasm. It carries out the reaction tRNA(Val) + L-valine + ATP = L-valyl-tRNA(Val) + AMP + diphosphate. Its function is as follows. Catalyzes the attachment of valine to tRNA(Val). As ValRS can inadvertently accommodate and process structurally similar amino acids such as threonine, to avoid such errors, it has a 'posttransfer' editing activity that hydrolyzes mischarged Thr-tRNA(Val) in a tRNA-dependent manner. The chain is Valine--tRNA ligase from Streptococcus mutans serotype c (strain ATCC 700610 / UA159).